The sequence spans 75 residues: Large ribosomal subunit protein bL31 (75 aa).

Zn(2+)-binding residues include Cys-16, Cys-18, Cys-37, and Cys-40.

It belongs to the bacterial ribosomal protein bL31 family. Type A subfamily. As to quaternary structure, part of the 50S ribosomal subunit. The cofactor is Zn(2+).

In terms of biological role, binds the 23S rRNA. The chain is Large ribosomal subunit protein bL31 from Baumannia cicadellinicola subsp. Homalodisca coagulata.